A 632-amino-acid chain; its full sequence is Chaperone protein DnaK (632 aa).

Threonine 198 is subject to Phosphothreonine; by autocatalysis. A disordered region spans residues 524–557 (RREAVDAKNHADSLVHSTEKALAEHGSKIEDSER).

The protein belongs to the heat shock protein 70 family.

Acts as a chaperone. The sequence is that of Chaperone protein DnaK from Nitrobacter hamburgensis (strain DSM 10229 / NCIMB 13809 / X14).